A 794-amino-acid polypeptide reads, in one-letter code: DNA ligase (794 aa).

Residues D35 to D39, S84 to L85, and E126 each bind NAD(+). K128 acts as the N6-AMP-lysine intermediate in catalysis. R149, E186, K302, and K326 together coordinate NAD(+). Residues C420, C423, C450, and C456 each coordinate Zn(2+). A BRCT domain is found at V711–R794.

Belongs to the NAD-dependent DNA ligase family. LigA subfamily. Requires Mg(2+) as cofactor. Mn(2+) serves as cofactor.

It catalyses the reaction NAD(+) + (deoxyribonucleotide)n-3'-hydroxyl + 5'-phospho-(deoxyribonucleotide)m = (deoxyribonucleotide)n+m + AMP + beta-nicotinamide D-nucleotide.. DNA ligase that catalyzes the formation of phosphodiester linkages between 5'-phosphoryl and 3'-hydroxyl groups in double-stranded DNA using NAD as a coenzyme and as the energy source for the reaction. It is essential for DNA replication and repair of damaged DNA. This chain is DNA ligase, found in Pseudomonas aeruginosa (strain LESB58).